A 150-amino-acid polypeptide reads, in one-letter code: uncharacterized protein (150 aa).

This is an uncharacterized protein from Bacillus subtilis (strain 168).